An 831-amino-acid chain; its full sequence is V-type proton ATPase subunit a (831 aa).

The Cytoplasmic portion of the chain corresponds to M1–E418. A helical transmembrane segment spans residues V419–F437. At G438–D439 the chain is on the vacuolar side. A helical membrane pass occupies residues L440–Y456. The Cytoplasmic segment spans residues E457–G471. The helical transmembrane segment at M472–P501 threads the bilayer. Residues M502 to S548 lie on the Vacuolar side of the membrane. Residues Y549–L568 traverse the membrane as a helical segment. The Cytoplasmic portion of the chain corresponds to S569–F586. Residues V587 to K607 traverse the membrane as a helical segment. The Vacuolar segment spans residues W608 to G650. The chain crosses the membrane as a helical span at residues L651–L670. At W671–T723 the chain is on the cytoplasmic side. A helical transmembrane segment spans residues I724–N748. At Q749–V769 the chain is on the vacuolar side. Residues G770–E808 form a helical membrane-spanning segment. Over G809–E831 the chain is Cytoplasmic.

It belongs to the V-ATPase 116 kDa subunit family. V-ATPase is a heteromultimeric enzyme composed of a peripheral catalytic V1 complex (components A to H) attached to an integral membrane V0 proton pore complex (components: a, c, c', c'', d, e, f and VOA1).

The protein resides in the vacuole membrane. Its function is as follows. Subunit of the V0 complex of vacuolar(H+)-ATPase (V-ATPase), a multisubunit enzyme composed of a peripheral complex (V1) that hydrolyzes ATP and a membrane integral complex (V0) that translocates protons. V-ATPase is responsible for acidifying and maintaining the pH of intracellular compartments. In Schizosaccharomyces pombe (strain 972 / ATCC 24843) (Fission yeast), this protein is V-type proton ATPase subunit a (vph1).